The following is a 580-amino-acid chain: 3-(3-hydroxy-phenyl)propionate/3-hydroxycinnamic acid hydroxylase (580 aa).

FAD-binding positions include 14-43 (DVLV…VVEE) and 291-301 (FRRGRLLLAGD).

Belongs to the PheA/TfdB FAD monooxygenase family. Requires FAD as cofactor.

The enzyme catalyses 3-(3-hydroxyphenyl)propanoate + NADH + O2 + H(+) = 3-(2,3-dihydroxyphenyl)propanoate + NAD(+) + H2O. It carries out the reaction (2E)-3-(3-hydroxyphenyl)prop-2-enoate + NADH + O2 + H(+) = (2E)-3-(2,3-dihydroxyphenyl)prop-2-enoate + NAD(+) + H2O. It functions in the pathway aromatic compound metabolism; 3-phenylpropanoate degradation. Catalyzes the insertion of one atom of molecular oxygen into position 2 of the phenyl ring of 3-(3-hydroxyphenyl)propionate (3-HPP) and hydroxycinnamic acid (3HCI). The protein is 3-(3-hydroxy-phenyl)propionate/3-hydroxycinnamic acid hydroxylase of Mycobacterium avium (strain 104).